Here is a 382-residue protein sequence, read N- to C-terminus: L-arabinitol 4-dehydrogenase (382 aa).

Residues Cys-55, His-80, Glu-81, Cys-110, Cys-113, Cys-116, Cys-124, and Glu-165 each coordinate Zn(2+). NAD(+)-binding positions include 192 to 193 (PI), Asp-213, Arg-218, Ile-293, and 317 to 319 (QYR).

Belongs to the zinc-containing alcohol dehydrogenase family. As to quaternary structure, homotetramer. It depends on Zn(2+) as a cofactor.

The enzyme catalyses L-arabinitol + NAD(+) = L-xylulose + NADH + H(+). The protein operates within carbohydrate degradation; L-arabinose degradation via L-arabinitol; D-xylulose 5-phosphate from L-arabinose (fungal route): step 2/5. Functionally, catalyzes the NAD-dependent oxidation of L-arabinitol to L-xylulose in the fungal L-arabinose catabolic pathway. L-arabinose catabolism is important for using plant material as a carbon source. Also active on ribitol and xylitol. Not active with NADP as cosubstrate. The sequence is that of L-arabinitol 4-dehydrogenase (ladA) from Aspergillus oryzae (Yellow koji mold).